Consider the following 201-residue polypeptide: Large ribosomal subunit protein uL4 (201 aa).

Positions 43–66 (TRAQKTRSEVSGGGKKPWRQKGTG) are disordered.

It belongs to the universal ribosomal protein uL4 family. In terms of assembly, part of the 50S ribosomal subunit.

Its function is as follows. One of the primary rRNA binding proteins, this protein initially binds near the 5'-end of the 23S rRNA. It is important during the early stages of 50S assembly. It makes multiple contacts with different domains of the 23S rRNA in the assembled 50S subunit and ribosome. In terms of biological role, forms part of the polypeptide exit tunnel. The sequence is that of Large ribosomal subunit protein uL4 from Tolumonas auensis (strain DSM 9187 / NBRC 110442 / TA 4).